Reading from the N-terminus, the 213-residue chain is Phosphatidylserine decarboxylase proenzyme (213 aa).

Residue Ser182 is the Schiff-base intermediate with substrate; via pyruvic acid of the active site. Pyruvic acid (Ser); by autocatalysis is present on Ser182.

This sequence belongs to the phosphatidylserine decarboxylase family. PSD-A subfamily. Heterodimer of a large membrane-associated beta subunit and a small pyruvoyl-containing alpha subunit. The cofactor is pyruvate. Post-translationally, is synthesized initially as an inactive proenzyme. Formation of the active enzyme involves a self-maturation process in which the active site pyruvoyl group is generated from an internal serine residue via an autocatalytic post-translational modification. Two non-identical subunits are generated from the proenzyme in this reaction, and the pyruvate is formed at the N-terminus of the alpha chain, which is derived from the carboxyl end of the proenzyme. The post-translation cleavage follows an unusual pathway, termed non-hydrolytic serinolysis, in which the side chain hydroxyl group of the serine supplies its oxygen atom to form the C-terminus of the beta chain, while the remainder of the serine residue undergoes an oxidative deamination to produce ammonia and the pyruvoyl prosthetic group on the alpha chain.

It localises to the cell membrane. It catalyses the reaction a 1,2-diacyl-sn-glycero-3-phospho-L-serine + H(+) = a 1,2-diacyl-sn-glycero-3-phosphoethanolamine + CO2. It participates in phospholipid metabolism; phosphatidylethanolamine biosynthesis; phosphatidylethanolamine from CDP-diacylglycerol: step 2/2. Catalyzes the formation of phosphatidylethanolamine (PtdEtn) from phosphatidylserine (PtdSer). The protein is Phosphatidylserine decarboxylase proenzyme of Geotalea daltonii (strain DSM 22248 / JCM 15807 / FRC-32) (Geobacter daltonii).